The following is a 519-amino-acid chain: Cytochrome P450 52A10 (519 aa).

Residue cysteine 466 participates in heme binding.

This sequence belongs to the cytochrome P450 family. Requires heme as cofactor.

It localises to the membrane. Together with an NADPH cytochrome P450 the enzyme system catalyzes the terminal hydroxylation as the first step in the assimilation of alkanes and fatty acids. The sequence is that of Cytochrome P450 52A10 (CYP52A10) from Candida maltosa (Yeast).